The chain runs to 653 residues: MEMVNFIFGIHNHQPLGNFGWVMESAYERSYRPFMETLEEYPNMKVAVHYSGPLLEWIRDNKPEHLDLLRSLVKRGQLEIVVAGFYEPVLASIPKEDRIVQIEKLKEFARNLGYEARGVWLTERVWQPELVKSLRAAGIDYVIVDDYHFMSAGLSKDELFWPYYTEDGGEVITVFPIDEKLRYLIPFRPVDKTLEYLHSLDDGDESKVAVFHDDGEKFGVWPGTYEWVYEKGWLREFFDRVSSDERINLMLYSEYLQRFRPRGLVYLPIASYFEMSEWSLPARQAKLFVEFVEELKKENKFDRYRVFVRGGIWKNFFFKYPESNYMHKRMLMVSKAVRNNPEAREFILRAQCNDAYWHGVFGGVYLPHLRRAVWENIIKAQSHVKTGNFVRDIDFDGRDEVFIENENFYAVFKPAYGGALFELSSKRKAVNYNDVLARRWEHYHEVPEAATPEEGGEGVASIHELGKQIPDEIRRELAYDSHLRAILQDHFLEPETTLDEYRLSRYIELGDFLTGAYNFSLIENGITLERDGSVAKRPARVEKSVRLTEDGFIVDYTVRSDARALFGVELNLAVHSVMEEPAEFEAEKFEVNDPYGIGKVEIELDRRAKVWKYPIKTLSQSESGWDFIQQGVSYTVLFPVEGELRFRLRFREL.

The Nucleophile role is filled by Glu-123. The Proton donor role is filled by Asp-214.

The protein belongs to the glycosyl hydrolase 57 family.

It catalyses the reaction Transfers a segment of a (1-&gt;4)-alpha-D-glucan to a new position in an acceptor, which may be glucose or a (1-&gt;4)-alpha-D-glucan.. This is 4-alpha-glucanotransferase from Thermococcus kodakarensis (strain ATCC BAA-918 / JCM 12380 / KOD1) (Pyrococcus kodakaraensis (strain KOD1)).